The following is a 236-amino-acid chain: uncharacterized protein (236 aa).

This is an uncharacterized protein from Schizosaccharomyces pombe (strain 972 / ATCC 24843) (Fission yeast).